A 301-amino-acid chain; its full sequence is Protoheme IX farnesyltransferase (301 aa).

The next 9 helical transmembrane spans lie at valine 29 to valine 49, leucine 51 to phenylalanine 71, isoleucine 96 to leucine 116, leucine 123 to leucine 143, isoleucine 151 to glycine 171, alanine 177 to isoleucine 197, cysteine 223 to methionine 243, cysteine 244 to tryptophan 264, and phenylalanine 281 to valine 301.

It belongs to the UbiA prenyltransferase family. Protoheme IX farnesyltransferase subfamily.

Its subcellular location is the cell inner membrane. The catalysed reaction is heme b + (2E,6E)-farnesyl diphosphate + H2O = Fe(II)-heme o + diphosphate. The protein operates within porphyrin-containing compound metabolism; heme O biosynthesis; heme O from protoheme: step 1/1. Functionally, converts heme B (protoheme IX) to heme O by substitution of the vinyl group on carbon 2 of heme B porphyrin ring with a hydroxyethyl farnesyl side group. This Shewanella pealeana (strain ATCC 700345 / ANG-SQ1) protein is Protoheme IX farnesyltransferase.